We begin with the raw amino-acid sequence, 691 residues long: Elongation factor G (691 aa).

The 275-residue stretch at 8 to 282 (ERVRNIGIAA…AVVNYLPAPV (275 aa)) folds into the tr-type G domain. GTP-binding positions include 17 to 24 (AHIDAGKT), 81 to 85 (DTPGH), and 135 to 138 (NKMD).

The protein belongs to the TRAFAC class translation factor GTPase superfamily. Classic translation factor GTPase family. EF-G/EF-2 subfamily.

Its subcellular location is the cytoplasm. Functionally, catalyzes the GTP-dependent ribosomal translocation step during translation elongation. During this step, the ribosome changes from the pre-translocational (PRE) to the post-translocational (POST) state as the newly formed A-site-bound peptidyl-tRNA and P-site-bound deacylated tRNA move to the P and E sites, respectively. Catalyzes the coordinated movement of the two tRNA molecules, the mRNA and conformational changes in the ribosome. This is Elongation factor G from Prochlorococcus marinus (strain NATL2A).